A 364-amino-acid chain; its full sequence is DNA replication and repair protein RecF (364 aa).

23–30 contacts ATP; the sequence is GPNGIGKS.

It belongs to the RecF family.

The protein resides in the cytoplasm. In terms of biological role, the RecF protein is involved in DNA metabolism; it is required for DNA replication and normal SOS inducibility. RecF binds preferentially to single-stranded, linear DNA. It also seems to bind ATP. This chain is DNA replication and repair protein RecF, found in Synechococcus sp. (strain CC9605).